Here is a 74-residue protein sequence, read N- to C-terminus: uncharacterized protein (74 aa).

To U.parvum UU416.

This is an uncharacterized protein from Mycoplasma pneumoniae (strain ATCC 29342 / M129 / Subtype 1) (Mycoplasmoides pneumoniae).